A 409-amino-acid chain; its full sequence is Putative competence-damage inducible protein (409 aa).

It belongs to the CinA family.

The protein is Putative competence-damage inducible protein of Clostridium botulinum (strain Langeland / NCTC 10281 / Type F).